A 348-amino-acid chain; its full sequence is MRIEEDLKLGFKDVLIRPKRSTLKSRSDVELAREYRFKHSGWQWSGVPLIAANMDTVGTFSMARVLAGFDVLTAVHKHYSVEQWQSFVSSVGEETLRHVMVSTGTSEADFIKLRQILALSPSLKFICIDVANGYSEHFVDFLRRARDVCPDKVICAGNVVTGEMVEELILSGADIVKVGIGPGSVCTTRVKTGVGYPQLSAVIECADAAHGLGGQIVSDGGCTMPGDVAKAFGGGADFVMLGGMLAAHAECEGRIVEEQGRKMMLFYGMSSASAMNRHVGGVADYRAAEGKTVSLPLRGPVENTVRDILGGLRSACTYVGASRLKELTKRTTFIRVAEQENRVFGRAD.

108–131 contacts NADP(+); sequence ADFIKLRQILALSPSLKFICIDVA. K(+)-binding residues include glycine 181 and glycine 183. Cysteine 186 (thioimidate intermediate) is an active-site residue. 216–239 is an NADP(+) binding site; that stretch reads IVSDGGCTMPGDVAKAFGGGADFV.

It belongs to the IMPDH/GMPR family. GuaC type 1 subfamily. Homotetramer.

The enzyme catalyses IMP + NH4(+) + NADP(+) = GMP + NADPH + 2 H(+). In terms of biological role, catalyzes the irreversible NADPH-dependent deamination of GMP to IMP. It functions in the conversion of nucleobase, nucleoside and nucleotide derivatives of G to A nucleotides, and in maintaining the intracellular balance of A and G nucleotides. The chain is GMP reductase from Edwardsiella ictaluri (strain 93-146).